The primary structure comprises 196 residues: dTTP/UTP pyrophosphatase (196 aa).

D76 acts as the Proton acceptor in catalysis.

It belongs to the Maf family. YhdE subfamily. The cofactor is a divalent metal cation.

It localises to the cytoplasm. The enzyme catalyses dTTP + H2O = dTMP + diphosphate + H(+). It catalyses the reaction UTP + H2O = UMP + diphosphate + H(+). In terms of biological role, nucleoside triphosphate pyrophosphatase that hydrolyzes dTTP and UTP. May have a dual role in cell division arrest and in preventing the incorporation of modified nucleotides into cellular nucleic acids. The chain is dTTP/UTP pyrophosphatase from Chlorobium chlorochromatii (strain CaD3).